The primary structure comprises 795 residues: Copper-exporting P-type ATPase (795 aa).

HMA domains follow at residues 5–70 (QNAT…YDVV) and 72–138 (DKAE…YDAQ). Positions 16, 19, 83, and 86 each coordinate Cu(+). 6 helical membrane passes run 161–181 (LMISTILSLPLLMTMLVHLFN), 187–207 (ILMNPWFQFILATPIQFIIGW), 224–244 (MDVLVALGTSAAYFYSIYEMI), 256–276 (LYFETSAVLITLILFGKYLEA), 412–432 (YFVPIVIAIALLTFLIWITLV), and 440–460 (ALVAAISVLVIACPCALGLAT). The active-site 4-aspartylphosphate intermediate is the Asp-496. 2 residues coordinate Mg(2+): Asp-690 and Asp-694. Helical transmembrane passes span 747–764 (NLFWAFGYNIAGIPIAAM) and 770–788 (WIAGAAMALSSVSVVSNAL).

The protein belongs to the cation transport ATPase (P-type) (TC 3.A.3) family. Type IB subfamily.

The protein localises to the cell membrane. It catalyses the reaction Cu(+)(in) + ATP + H2O = Cu(+)(out) + ADP + phosphate + H(+). Involved in copper export. The polypeptide is Copper-exporting P-type ATPase (copA) (Staphylococcus haemolyticus (strain JCSC1435)).